The sequence spans 99 residues: Aspartyl/glutamyl-tRNA(Asn/Gln) amidotransferase subunit C (99 aa).

This sequence belongs to the GatC family. In terms of assembly, heterotrimer of A, B and C subunits.

It catalyses the reaction L-glutamyl-tRNA(Gln) + L-glutamine + ATP + H2O = L-glutaminyl-tRNA(Gln) + L-glutamate + ADP + phosphate + H(+). The catalysed reaction is L-aspartyl-tRNA(Asn) + L-glutamine + ATP + H2O = L-asparaginyl-tRNA(Asn) + L-glutamate + ADP + phosphate + 2 H(+). Functionally, allows the formation of correctly charged Asn-tRNA(Asn) or Gln-tRNA(Gln) through the transamidation of misacylated Asp-tRNA(Asn) or Glu-tRNA(Gln) in organisms which lack either or both of asparaginyl-tRNA or glutaminyl-tRNA synthetases. The reaction takes place in the presence of glutamine and ATP through an activated phospho-Asp-tRNA(Asn) or phospho-Glu-tRNA(Gln). This is Aspartyl/glutamyl-tRNA(Asn/Gln) amidotransferase subunit C from Corynebacterium efficiens (strain DSM 44549 / YS-314 / AJ 12310 / JCM 11189 / NBRC 100395).